The sequence spans 661 residues: Probable potassium transport system protein Kup 1 (661 aa).

Residues 1-11 are compositionally biased toward gly residues; that stretch reads MKGLFPAGGGN. Positions 1–38 are disordered; sequence MKGLFPAGGGNPPSSYLSRFLPHRKERSPENVTSGRNG. 12 consecutive transmembrane segments (helical) span residues 48 to 68, 85 to 105, 139 to 159, 177 to 197, 207 to 227, 251 to 271, 286 to 306, 324 to 344, 384 to 404, 405 to 425, 436 to 456, and 458 to 478; these read LALGALGIVYGDIGTSPLYTI, IMGVLSLILWSLTMVVSIKYI, AVVVMAALTGAALLYGDGFIT, AAKNLIVPLACGILLGLFLVQ, IFGPVMLVWFATIATLGLLCI, VHGLVVLGSVVLSITGGEALY, WFAMVFPSLLLNYFGQGAALL, LLLPMVALATMASIIASQAMI, LMMVVCIGLVLVFRASSGLAG, AYGVAVTANMAITSVVYFFVA, TAPLVGLFLVFDITYFGSNLL, and FFDGGWFPLAVALVIVIVMAS.

It belongs to the HAK/KUP transporter (TC 2.A.72) family.

Its subcellular location is the cell inner membrane. The catalysed reaction is K(+)(in) + H(+)(in) = K(+)(out) + H(+)(out). Functionally, transport of potassium into the cell. Likely operates as a K(+):H(+) symporter. The polypeptide is Probable potassium transport system protein Kup 1 (Syntrophobacter fumaroxidans (strain DSM 10017 / MPOB)).